We begin with the raw amino-acid sequence, 127 residues long: Ribonuclease VapC9 (127 aa).

The region spanning 2–115 (IVVDASAALA…VTADLRLSDT (114 aa)) is the PINc domain. Mg(2+)-binding residues include D5 and D91.

This sequence belongs to the PINc/VapC protein family. Requires Mg(2+) as cofactor.

Functionally, toxic component of a type II toxin-antitoxin (TA) system. An RNase. The cognate antitoxin is VapB9. In Mycobacterium tuberculosis (strain CDC 1551 / Oshkosh), this protein is Ribonuclease VapC9.